We begin with the raw amino-acid sequence, 169 residues long: Peptide methionine sulfoxide reductase MsrA 1 (169 aa).

Residue cysteine 12 is part of the active site.

It belongs to the MsrA Met sulfoxide reductase family.

The enzyme catalyses L-methionyl-[protein] + [thioredoxin]-disulfide + H2O = L-methionyl-(S)-S-oxide-[protein] + [thioredoxin]-dithiol. It catalyses the reaction [thioredoxin]-disulfide + L-methionine + H2O = L-methionine (S)-S-oxide + [thioredoxin]-dithiol. In terms of biological role, has an important function as a repair enzyme for proteins that have been inactivated by oxidation. Catalyzes the reversible oxidation-reduction of methionine sulfoxide in proteins to methionine. This is Peptide methionine sulfoxide reductase MsrA 1 (msrA1) from Staphylococcus aureus (strain Mu50 / ATCC 700699).